Reading from the N-terminus, the 206-residue chain is Holliday junction branch migration complex subunit RuvA (206 aa).

Residues 1-64 are domain I; sequence MIAKLTGLLD…EDNIQLFGFA (64 aa). Residues 65–143 are domain II; the sequence is DTEERDWFRL…SFGAPAPAAA (79 aa). The flexible linker stretch occupies residues 144–154; sequence TAGKGGAAPAG. The domain III stretch occupies residues 154 to 206; sequence GPAGAVADAVSALVNLGYRRVEAFTAVNAVAQRLGPEAGVSDLIRAGLKELSP.

Belongs to the RuvA family. As to quaternary structure, homotetramer. Forms an RuvA(8)-RuvB(12)-Holliday junction (HJ) complex. HJ DNA is sandwiched between 2 RuvA tetramers; dsDNA enters through RuvA and exits via RuvB. An RuvB hexamer assembles on each DNA strand where it exits the tetramer. Each RuvB hexamer is contacted by two RuvA subunits (via domain III) on 2 adjacent RuvB subunits; this complex drives branch migration. In the full resolvosome a probable DNA-RuvA(4)-RuvB(12)-RuvC(2) complex forms which resolves the HJ.

It localises to the cytoplasm. In terms of biological role, the RuvA-RuvB-RuvC complex processes Holliday junction (HJ) DNA during genetic recombination and DNA repair, while the RuvA-RuvB complex plays an important role in the rescue of blocked DNA replication forks via replication fork reversal (RFR). RuvA specifically binds to HJ cruciform DNA, conferring on it an open structure. The RuvB hexamer acts as an ATP-dependent pump, pulling dsDNA into and through the RuvAB complex. HJ branch migration allows RuvC to scan DNA until it finds its consensus sequence, where it cleaves and resolves the cruciform DNA. This is Holliday junction branch migration complex subunit RuvA from Rhodospirillum centenum (strain ATCC 51521 / SW).